The sequence spans 82 residues: Sec-independent protein translocase protein TatA (82 aa).

Residues 1 to 21 (MGSFSIWHWLIVLLIVVMVFG) traverse the membrane as a helical segment. The tract at residues 46–82 (GASTDDSATTSAPAGQVTNNSAAADKTTIDVEAKHKS) is disordered. Polar residues predominate over residues 49–67 (TDDSATTSAPAGQVTNNSA). Residues 72 to 82 (TTIDVEAKHKS) show a composition bias toward basic and acidic residues.

The protein belongs to the TatA/E family. The Tat system comprises two distinct complexes: a TatABC complex, containing multiple copies of TatA, TatB and TatC subunits, and a separate TatA complex, containing only TatA subunits. Substrates initially bind to the TatABC complex, which probably triggers association of the separate TatA complex to form the active translocon.

It localises to the cell inner membrane. Its function is as follows. Part of the twin-arginine translocation (Tat) system that transports large folded proteins containing a characteristic twin-arginine motif in their signal peptide across membranes. TatA could form the protein-conducting channel of the Tat system. The polypeptide is Sec-independent protein translocase protein TatA (Acidovorax ebreus (strain TPSY) (Diaphorobacter sp. (strain TPSY))).